Consider the following 214-residue polypeptide: Small ribosomal subunit protein uS5 (214 aa).

The S5 DRBM domain occupies 54–117; the sequence is LKYEVMDIKI…KNAKMNIIPV (64 aa).

It belongs to the universal ribosomal protein uS5 family. As to quaternary structure, part of the 30S ribosomal subunit. Contacts protein S4.

With S4 and S12 plays an important role in translational accuracy. In Sulfurisphaera tokodaii (strain DSM 16993 / JCM 10545 / NBRC 100140 / 7) (Sulfolobus tokodaii), this protein is Small ribosomal subunit protein uS5.